Reading from the N-terminus, the 305-residue chain is MEEKDSCYHVPVMLRESLEGLDIRPDGIYVDVTFGGGGHSREILKRLGSEGELYGFDQDADAEHNVPADPRFTFVRSNFRYLYNFMRYYGESGEVDGLLADLGVSSHHFDDKDRGFSFRFDGTLDMRMNTRAGQTAADIVNNYTAEALADVFYLYGELKVSRKLASVLVKARETKKIETIGDFLEVIKPFTGKDKEKKFLAQVFQALRIEVNDEMRALKEMLRSTLRVLRPGGRLVVITYHSLEDRLVKNFLKTGNFEGKCEQDFFGNVRSPFRLVNNKVIVPTDEEVERNPRSRSAKLRIAEKV.

S-adenosyl-L-methionine is bound by residues 37–39, Asp57, Phe85, Asp101, and His108; that span reads GGH.

This sequence belongs to the methyltransferase superfamily. RsmH family.

Its subcellular location is the cytoplasm. It carries out the reaction cytidine(1402) in 16S rRNA + S-adenosyl-L-methionine = N(4)-methylcytidine(1402) in 16S rRNA + S-adenosyl-L-homocysteine + H(+). In terms of biological role, specifically methylates the N4 position of cytidine in position 1402 (C1402) of 16S rRNA. This is Ribosomal RNA small subunit methyltransferase H from Parabacteroides distasonis (strain ATCC 8503 / DSM 20701 / CIP 104284 / JCM 5825 / NCTC 11152).